The chain runs to 315 residues: MEETTIPFKSLHSREYQGHKKKVHSVAWNSNGTKLASGSVDQTARIWNIEPHGHSKAKDLELKGHTDSVDQLCWDPKHSDLVATASGDKSVRLWDARSGKCTQQVELSGENINITYKPDGTHVAVGNRDDELTILDVRKFKPLHRRKFNYEVNEIAWNMPGDFFFLTTGLGTVEVLSYPSLKPLDTLTAHTAGCYCIAIDPKGRYFAVGSADSLVSLWDISDMLCLRTFTKLEWPVRTISFNYSGEYIASASEDLFIDIANVQTGRTVHQIPCRAAMNSVEWNPKYNLLAYAGDDKNPKYNTDEGVFRIFGFESS.

6 WD repeats span residues glycine 18 to alanine 57, glycine 64 to glutamine 104, glutamate 106 to arginine 145, alanine 189 to threonine 228, lysine 231 to glutamine 270, and proline 272 to glycine 311.

Belongs to the THOC3 family. In terms of assembly, component of the THO complex, which is composed of THO1, THO2, THO3, THO5, THO6 and THO7.

The protein resides in the nucleus. Acts as a component of the THO subcomplex of the TREX complex which is thought to couple mRNA transcription, processing and nuclear export. Contributes to the integrity of the endogenous trans-acting small interfering RNA (ta-siRNA) pathway. May process or transport a long RNA molecule so that it can be a template for secondary siRNA production. May participate in the trafficking of siRNA precursors to the ARGONAUTE catalytic center. Required for the generation of functional messenger ribonucleoproteins (mRNPs). The sequence is that of THO complex subunit 3 (THO3) from Arabidopsis thaliana (Mouse-ear cress).